Consider the following 394-residue polypeptide: Anhydro-N-acetylmuramic acid kinase (394 aa).

ATP is bound at residue 11–18 (GTSADGID).

It belongs to the anhydro-N-acetylmuramic acid kinase family.

The catalysed reaction is 1,6-anhydro-N-acetyl-beta-muramate + ATP + H2O = N-acetyl-D-muramate 6-phosphate + ADP + H(+). The protein operates within amino-sugar metabolism; 1,6-anhydro-N-acetylmuramate degradation. Its pathway is cell wall biogenesis; peptidoglycan recycling. Functionally, catalyzes the specific phosphorylation of 1,6-anhydro-N-acetylmuramic acid (anhMurNAc) with the simultaneous cleavage of the 1,6-anhydro ring, generating MurNAc-6-P. Is required for the utilization of anhMurNAc either imported from the medium or derived from its own cell wall murein, and thus plays a role in cell wall recycling. The protein is Anhydro-N-acetylmuramic acid kinase of Deinococcus geothermalis (strain DSM 11300 / CIP 105573 / AG-3a).